Consider the following 526-residue polypeptide: 2-succinyl-5-enolpyruvyl-6-hydroxy-3-cyclohexene-1-carboxylate synthase (526 aa).

Belongs to the TPP enzyme family. MenD subfamily. In terms of assembly, homodimer. Requires Mg(2+) as cofactor. Mn(2+) is required as a cofactor. It depends on thiamine diphosphate as a cofactor.

It carries out the reaction isochorismate + 2-oxoglutarate + H(+) = 5-enolpyruvoyl-6-hydroxy-2-succinyl-cyclohex-3-ene-1-carboxylate + CO2. It participates in quinol/quinone metabolism; 1,4-dihydroxy-2-naphthoate biosynthesis; 1,4-dihydroxy-2-naphthoate from chorismate: step 2/7. Its pathway is quinol/quinone metabolism; menaquinone biosynthesis. Functionally, catalyzes the thiamine diphosphate-dependent decarboxylation of 2-oxoglutarate and the subsequent addition of the resulting succinic semialdehyde-thiamine pyrophosphate anion to isochorismate to yield 2-succinyl-5-enolpyruvyl-6-hydroxy-3-cyclohexene-1-carboxylate (SEPHCHC). The polypeptide is 2-succinyl-5-enolpyruvyl-6-hydroxy-3-cyclohexene-1-carboxylate synthase (Bdellovibrio bacteriovorus (strain ATCC 15356 / DSM 50701 / NCIMB 9529 / HD100)).